The sequence spans 158 residues: 3-hydroxyacyl-[acyl-carrier-protein] dehydratase FabZ (158 aa).

Histidine 61 is a catalytic residue.

Belongs to the thioester dehydratase family. FabZ subfamily.

The protein resides in the cytoplasm. It carries out the reaction a (3R)-hydroxyacyl-[ACP] = a (2E)-enoyl-[ACP] + H2O. Functionally, involved in unsaturated fatty acids biosynthesis. Catalyzes the dehydration of short chain beta-hydroxyacyl-ACPs and long chain saturated and unsaturated beta-hydroxyacyl-ACPs. The polypeptide is 3-hydroxyacyl-[acyl-carrier-protein] dehydratase FabZ (Methylobacterium radiotolerans (strain ATCC 27329 / DSM 1819 / JCM 2831 / NBRC 15690 / NCIMB 10815 / 0-1)).